The sequence spans 424 residues: Nicotinate phosphoribosyltransferase (424 aa).

His242 carries the phosphohistidine; by autocatalysis modification.

This sequence belongs to the NAPRTase family. Post-translationally, transiently phosphorylated on a His residue during the reaction cycle. Phosphorylation strongly increases the affinity for substrates and increases the rate of nicotinate D-ribonucleotide production. Dephosphorylation regenerates the low-affinity form of the enzyme, leading to product release.

It carries out the reaction nicotinate + 5-phospho-alpha-D-ribose 1-diphosphate + ATP + H2O = nicotinate beta-D-ribonucleotide + ADP + phosphate + diphosphate. It functions in the pathway cofactor biosynthesis; NAD(+) biosynthesis; nicotinate D-ribonucleotide from nicotinate: step 1/1. Functionally, catalyzes the synthesis of beta-nicotinate D-ribonucleotide from nicotinate and 5-phospho-D-ribose 1-phosphate at the expense of ATP. The protein is Nicotinate phosphoribosyltransferase of Bartonella bacilliformis (strain ATCC 35685 / KC583 / Herrer 020/F12,63).